A 482-amino-acid chain; its full sequence is UDP-N-acetylmuramate--L-alanine ligase (482 aa).

Residue 119–125 (GTHGKTT) coordinates ATP.

It belongs to the MurCDEF family.

Its subcellular location is the cytoplasm. It carries out the reaction UDP-N-acetyl-alpha-D-muramate + L-alanine + ATP = UDP-N-acetyl-alpha-D-muramoyl-L-alanine + ADP + phosphate + H(+). It participates in cell wall biogenesis; peptidoglycan biosynthesis. Functionally, cell wall formation. In Cyanothece sp. (strain PCC 7425 / ATCC 29141), this protein is UDP-N-acetylmuramate--L-alanine ligase.